Consider the following 270-residue polypeptide: MDDLKTRVITASVVAPFVVLCFVSYESLIGLVSAILILAGYELITLEMKERDARFFYVILLALYPVLYGLVFEEPTQPLSILFITGVVFSLITDKDPSQVFKTVAAFSIALIYVTFFLSFFLPIYRDFGAANALLVLTSTWVFDSFAYFTGLKFGRTRISPRYSPRKSLEGVIGGFLGVVIYTFLYRLVVNDLLSVNVISFRTFLPFAATVAIMDTFGDIFESALKRHYGVKDSGKTLPGHGGMLDRIDGLLFVAPVSYIVFKILEGVVR.

Transmembrane regions (helical) follow at residues 17–37 (FVVLCFVSYESLIGLVSAILI), 55–75 (FFYVILLALYPVLYGLVFEEP), 81–101 (ILFITGVVFSLITDKDPSQVF), 104–124 (VAAFSIALIYVTFFLSFFLPI), 129–149 (GAANALLVLTSTWVFDSFAYF), 170–190 (EGVIGGFLGVVIYTFLYRLVV), 193–213 (LLSVNVISFRTFLPFAATVAI), and 248–268 (IDGLLFVAPVSYIVFKILEGV).

The protein belongs to the CDS family.

The protein localises to the cell membrane. The enzyme catalyses a 1,2-diacyl-sn-glycero-3-phosphate + CTP + H(+) = a CDP-1,2-diacyl-sn-glycerol + diphosphate. Its pathway is phospholipid metabolism; CDP-diacylglycerol biosynthesis; CDP-diacylglycerol from sn-glycerol 3-phosphate: step 3/3. The protein is Phosphatidate cytidylyltransferase (cdsA) of Thermotoga maritima (strain ATCC 43589 / DSM 3109 / JCM 10099 / NBRC 100826 / MSB8).